Here is a 71-residue protein sequence, read N- to C-terminus: uncharacterized protein (71 aa).

A signal peptide spans 1–19 (MFLFPSLLSSFCITLRSIS).

This is an uncharacterized protein from Pasteurella multocida (strain Pm70).